The following is a 177-amino-acid chain: Large ribosomal subunit protein uL6 (177 aa).

Belongs to the universal ribosomal protein uL6 family. In terms of assembly, part of the 50S ribosomal subunit.

In terms of biological role, this protein binds to the 23S rRNA, and is important in its secondary structure. It is located near the subunit interface in the base of the L7/L12 stalk, and near the tRNA binding site of the peptidyltransferase center. This is Large ribosomal subunit protein uL6 from Rhizobium meliloti (strain 1021) (Ensifer meliloti).